Consider the following 88-residue polypeptide: Parvalbumin beta 3 (88 aa).

Ala1 carries the N-acetylalanine modification. In terms of domain architecture, EF-hand spans 31–66; the sequence is KSPEEVKKFFAIIDQDHSGFIEEEELKLFLQTFSAG. Positions 44, 46, 48, 50, 52, 55, and 81 each coordinate Ca(2+).

It belongs to the parvalbumin family.

In muscle, parvalbumin is thought to be involved in relaxation after contraction. It binds two calcium ions. The polypeptide is Parvalbumin beta 3 (Merluccius productus (North Pacific hake)).